The chain runs to 330 residues: Aspartate--ammonia ligase (330 aa).

It belongs to the class-II aminoacyl-tRNA synthetase family. AsnA subfamily.

It localises to the cytoplasm. It carries out the reaction L-aspartate + NH4(+) + ATP = L-asparagine + AMP + diphosphate + H(+). The protein operates within amino-acid biosynthesis; L-asparagine biosynthesis; L-asparagine from L-aspartate (ammonia route): step 1/1. This is Aspartate--ammonia ligase from Streptococcus equi subsp. zooepidemicus (strain H70).